A 224-amino-acid chain; its full sequence is MINCLIVDDDKKLLQYVSSHLERESIQTHTFTSGEASLDFLENKNVDIAIVDIMMSGMDGFELCQTLKDDYHIPVIMLTARDALSDKERAFLSGTDDYVTKPFEVKELLFRIKAVLRRYQINADNELQLGNLILNQSYMEITVGSKTMNLPNKEFQLLFLLASNPKHIFTRDDIIGKIWGFDYEGDDRTVDVHIKRLRQRLSKLKSSVSIQTVRGQGYRVDQNV.

The region spanning N3–L116 is the Response regulatory domain. D52 bears the 4-aspartylphosphate mark. The segment at residues D124–Q222 is a DNA-binding region (ompR/PhoB-type).

Post-translationally, phosphorylated by HssS.

The protein resides in the cytoplasm. Its function is as follows. Member of the two-component regulatory system HssS/HssR involved in intracellular heme homeostasis and tempering of staphylococcal virulence. Phosphorylated HssR binds to a direct repeat sequence within hrtAB promoter and activates the expression of hrtAB, an efflux pump, in response to extracellular heme, hemin, hemoglobin or blood. In Staphylococcus epidermidis (strain ATCC 12228 / FDA PCI 1200), this protein is Heme response regulator HssR (hssR).